We begin with the raw amino-acid sequence, 440 residues long: Asparagine--tRNA ligase (440 aa).

The protein belongs to the class-II aminoacyl-tRNA synthetase family. Homodimer.

The protein localises to the cytoplasm. The enzyme catalyses tRNA(Asn) + L-asparagine + ATP = L-asparaginyl-tRNA(Asn) + AMP + diphosphate + H(+). The polypeptide is Asparagine--tRNA ligase (Roseiflexus castenholzii (strain DSM 13941 / HLO8)).